Reading from the N-terminus, the 154-residue chain is Ascorbate-specific PTS system EIIA component (154 aa).

In terms of domain architecture, PTS EIIA type-2 spans 6 to 150 (SLAENNSIRL…QEVLDLIDRT (145 aa)). His68 (tele-phosphohistidine intermediate) is an active-site residue. Position 68 is a phosphohistidine (His68).

It is found in the cytoplasm. The phosphoenolpyruvate-dependent sugar phosphotransferase system (sugar PTS), a major carbohydrate active transport system, catalyzes the phosphorylation of incoming sugar substrates concomitantly with their translocation across the cell membrane. The enzyme II UlaABC PTS system is involved in ascorbate transport. The sequence is that of Ascorbate-specific PTS system EIIA component (ulaC) from Salmonella typhi.